A 311-amino-acid chain; its full sequence is Acetaldehyde dehydrogenase 2 (311 aa).

An NAD(+)-binding site is contributed by 11-14; it reads SGNI. C131 functions as the Acyl-thioester intermediate in the catalytic mechanism. NAD(+)-binding positions include 162–170 and N289; that span reads SAGPGTRAN.

It belongs to the acetaldehyde dehydrogenase family.

It catalyses the reaction acetaldehyde + NAD(+) + CoA = acetyl-CoA + NADH + H(+). The protein is Acetaldehyde dehydrogenase 2 (mhpF) of Azotobacter vinelandii (strain DJ / ATCC BAA-1303).